The chain runs to 155 residues: Endoribonuclease YbeY (155 aa).

Positions 114, 118, and 124 each coordinate Zn(2+).

Belongs to the endoribonuclease YbeY family. It depends on Zn(2+) as a cofactor.

Its subcellular location is the cytoplasm. Its function is as follows. Single strand-specific metallo-endoribonuclease involved in late-stage 70S ribosome quality control and in maturation of the 3' terminus of the 16S rRNA. The sequence is that of Endoribonuclease YbeY from Escherichia coli O7:K1 (strain IAI39 / ExPEC).